Here is a 392-residue protein sequence, read N- to C-terminus: Pannexin-3 (392 aa).

The Cytoplasmic portion of the chain corresponds to 1–39 (MSLAHTAAEYMLSDALLPDRRGSRLKGLRLELPLDKMVK). Residues 40 to 60 (FITVGFPLLLMSLAFAQEFSS) traverse the membrane as a helical segment. Topologically, residues 61-113 (GSPISCFSPSNFSVRQAAYVDSSCWDSLAHHTQDKAGQYKVKSLWPHKALPYS) are extracellular. Residue N71 is glycosylated (N-linked (GlcNAc...) asparagine). The helical transmembrane segment at 114–134 (LLALAVAMYLPVLLWQYVAVP) threads the bilayer. Residues 135 to 215 (SLSSDLLFII…VATYLLRNAL (81 aa)) are Cytoplasmic-facing. A helical membrane pass occupies residues 216-236 (LLLFTSATYLYLGQFHLDVFF). Residues 237–267 (QDEFNCFIKTGLLHDETHVPELITCRLTSLS) lie on the Extracellular side of the membrane. A helical transmembrane segment spans residues 268-288 (VFQIVSVSSAAIYTILVPVII). Residues 289-392 (YNLTRLCRWD…LTQHTYDEHA (104 aa)) are Cytoplasmic-facing.

The protein belongs to the pannexin family. In terms of assembly, homoheptameric. N-glycosylation may play a role in cell surface targeting. In terms of tissue distribution, expressed in skin, cartilage, heart, lung, liver, spleen, thymus and kidney. Not expressed in brain. Expressed in calvarial cells.

Its subcellular location is the cell membrane. The protein resides in the endoplasmic reticulum membrane. It catalyses the reaction Ca(2+)(in) = Ca(2+)(out). It carries out the reaction ATP(in) = ATP(out). Regulator of osteoblast differentiation by functionning as a Ca(2+) channel in the endoplasmic reticulum which regulates calmodulin (CaM) pathways. Allows ATP release into the extracellular space and activation or purinergic receptors. In Mus musculus (Mouse), this protein is Pannexin-3 (Panx3).